Reading from the N-terminus, the 888-residue chain is Interference hedgehog (888 aa).

The N-terminal stretch at 1 to 24 (MSLTRFSLCLLLTLLLAAIPVYLA) is a signal peptide. At 25 to 688 (SPDPGVRILR…SHNETFNLNP (664 aa)) the chain is on the extracellular side. 4 Ig-like C2-type domains span residues 28 to 123 (PGVR…ARLE), 134 to 215 (EGFK…VRLA), 234 to 321 (PHLL…SIQL), and 327 to 414 (PRIV…LQVN). Intrachain disulfides connect C51/C106, C155/C203, and C257/C305. N80, N185, N192, N281, N336, N365, N369, and N455 each carry an N-linked (GlcNAc...) asparagine glycan. A disulfide bond links C348 and C396. Fibronectin type-III domains are found at residues 450-557 (PPSA…LQRG) and 565-660 (VPSL…TQRP). 2 residues coordinate heparin: R486 and K493. N516 carries N-linked (GlcNAc...) asparagine glycosylation. R531 lines the heparin pocket. N-linked (GlcNAc...) asparagine glycosylation occurs at N547. A compositionally biased stretch (polar residues) spans 655–667 (GRTQRPRVSTTTE). Residues 655 to 679 (GRTQRPRVSTTTEPAVHAMDTTTPS) form a disordered region. N681 carries an N-linked (GlcNAc...) asparagine glycan. Residues 689–709 (LLTGTIGGGALLVLLVVSACL) form a helical membrane-spanning segment. The Cytoplasmic portion of the chain corresponds to 710 to 888 (CLCRRRSSRG…SSGSLNSVGV (179 aa)). Disordered stretches follow at residues 759 to 789 (AQQQQQQQQQQQQQQQQQHEEKDTQDNDMSY), 812 to 864 (SSSL…PGRV), and 869 to 888 (ARLSSRSENLSSGSLNSVGV). The span at 760 to 775 (QQQQQQQQQQQQQQQQ) shows a compositional bias: low complexity. Residues 843 to 859 (QPTDGSTADSPRLQASN) are compositionally biased toward polar residues. The segment covering 872-888 (SSRSENLSSGSLNSVGV) has biased composition (low complexity).

It belongs to the immunoglobulin superfamily. IHOG family. Homodimer. Heterotetramer; 2 iHog chains bind 2 hh chains when facilitated by heparin, heparin is required to promote high-affinity interactions between hh and iHog.

The protein resides in the membrane. Its function is as follows. Mediates response to the active Hedgehog (Hh) protein signal in embryos, functioning upstream or at the level of patched (ptc). The chain is Interference hedgehog from Drosophila grimshawi (Hawaiian fruit fly).